An 83-amino-acid polypeptide reads, in one-letter code: Bublin coiled-coil protein (83 aa).

The disordered stretch occupies residues 1–25; that stretch reads MSGPNGDLGTPVEAGAEGEEDGFGE. Positions 25–74 form a coiled coil; it reads EAEYAAINSMLDQINSCLDHLEEKNDHLHARLQELLESNRQTRLEFQQQL. Phosphoserine is present on Ser-82.

This sequence belongs to the UPF0184 (EST00098) family.

The protein resides in the cell junction. The protein localises to the cytoplasm. Its subcellular location is the cytoskeleton. In terms of biological role, essential for intermediate filament organization in intestinal cells, interacts with intermediate filament and regulates intestinal lumen morphology. This is Bublin coiled-coil protein (BBLN) from Bos taurus (Bovine).